The primary structure comprises 536 residues: Metal transporter Nramp2 (536 aa).

Residues Met1 to Glu37 are disordered. A compositionally biased stretch (low complexity) spans Leu22 to Ser36. N-linked (GlcNAc...) asparagine glycosylation is present at Asn38. Helical transmembrane passes span Leu76–Leu96, Ala104–Ile124, Val161–Leu181, Phe185–Leu205, Leu213–Gly233, Ala259–Val279, Val305–Phe325, Tyr347–Gln367, Ser400–Leu420, Ile435–Phe455, Ala465–Ile485, and Leu492–Val512.

Belongs to the NRAMP (TC 2.A.55) family.

It localises to the membrane. Probable divalent metal transporter. The polypeptide is Metal transporter Nramp2 (Populus trichocarpa (Western balsam poplar)).